The primary structure comprises 366 residues: Autoinducer 2-binding periplasmic protein LuxP (366 aa).

The signal sequence occupies residues Met1–Ala13.

This sequence belongs to the bacterial solute-binding protein 2 family.

It localises to the periplasm. Binds to an autoinducer molecule. This complex then interacts with the LuxQ sensor protein. The chain is Autoinducer 2-binding periplasmic protein LuxP (luxP) from Vibrio vulnificus (strain YJ016).